We begin with the raw amino-acid sequence, 156 residues long: Baculoviral IAP repeat-containing protein 5.2 (156 aa).

Residues 30 to 100 form a BIR repeat; that stretch reads RLSTFANWPF…KHSPSCLFIA (71 aa). Threonine 46 is modified (phosphothreonine; by CDK1). 4 residues coordinate Zn(2+): cysteine 69, cysteine 72, histidine 89, and cysteine 96.

This sequence belongs to the IAP family. Component of the CPC at least composed of survivin/birc5, incenp, cdca8/borealin and/or cdca9/dasra-A, and aurkb/aurora-B. Interacts directly with incenp (via N-terminus). Interacts with rxra; the interaction is stronger in the absence of 9-cis retinoic acids. Ubiquitination is required for centrosome-targeting.

The protein resides in the cytoplasm. The protein localises to the nucleus. It localises to the chromosome. It is found in the centromere. Its subcellular location is the cytoskeleton. The protein resides in the spindle. In terms of biological role, component of the chromosomal passenger complex (CPC), a complex that acts as a key regulator of mitosis. The CPC complex has essential functions at the centromere in ensuring correct chromosome alignment and segregation and is required for chromatin-induced microtubule stabilization and spindle assembly. Does not appear to exhibit anti-apoptotic activity. Plays a role in increasing blood vessel size during development. The polypeptide is Baculoviral IAP repeat-containing protein 5.2 (birc5.2) (Xenopus tropicalis (Western clawed frog)).